The sequence spans 397 residues: Phosphoglycerate kinase (397 aa).

Residues 21–23 (DFN), Arg-37, 60–63 (HLGR), Arg-119, and Arg-152 contribute to the substrate site. ATP is bound by residues Lys-202, Gly-294, Glu-325, and 351-354 (GGDS).

This sequence belongs to the phosphoglycerate kinase family. In terms of assembly, monomer.

It is found in the cytoplasm. The enzyme catalyses (2R)-3-phosphoglycerate + ATP = (2R)-3-phospho-glyceroyl phosphate + ADP. The protein operates within carbohydrate degradation; glycolysis; pyruvate from D-glyceraldehyde 3-phosphate: step 2/5. The protein is Phosphoglycerate kinase of Pseudothermotoga lettingae (strain ATCC BAA-301 / DSM 14385 / NBRC 107922 / TMO) (Thermotoga lettingae).